The following is a 122-amino-acid chain: Large ribosomal subunit protein uL14c (122 aa).

Belongs to the universal ribosomal protein uL14 family. As to quaternary structure, part of the 50S ribosomal subunit.

The protein resides in the plastid. It localises to the chloroplast. Its function is as follows. Binds to 23S rRNA. This chain is Large ribosomal subunit protein uL14c, found in Welwitschia mirabilis (Tree tumbo).